The primary structure comprises 135 residues: Large ribosomal subunit protein eL32 (135 aa).

The protein belongs to the eukaryotic ribosomal protein eL32 family.

In Methanococcus maripaludis (strain C6 / ATCC BAA-1332), this protein is Large ribosomal subunit protein eL32.